The chain runs to 311 residues: Aspartate carbamoyltransferase catalytic subunit (311 aa).

Carbamoyl phosphate is bound by residues R55 and T56. K83 is an L-aspartate binding site. Residues R105, H133, and Q136 each contribute to the carbamoyl phosphate site. L-aspartate contacts are provided by R166 and R220. Residues G261 and P262 each coordinate carbamoyl phosphate.

It belongs to the aspartate/ornithine carbamoyltransferase superfamily. ATCase family. As to quaternary structure, heterododecamer (2C3:3R2) of six catalytic PyrB chains organized as two trimers (C3), and six regulatory PyrI chains organized as three dimers (R2).

The enzyme catalyses carbamoyl phosphate + L-aspartate = N-carbamoyl-L-aspartate + phosphate + H(+). It participates in pyrimidine metabolism; UMP biosynthesis via de novo pathway; (S)-dihydroorotate from bicarbonate: step 2/3. Functionally, catalyzes the condensation of carbamoyl phosphate and aspartate to form carbamoyl aspartate and inorganic phosphate, the committed step in the de novo pyrimidine nucleotide biosynthesis pathway. This Chlorobium chlorochromatii (strain CaD3) protein is Aspartate carbamoyltransferase catalytic subunit.